Reading from the N-terminus, the 337-residue chain is MGVTVAIDCMGGDHGPAVTVPAARAFLRNHPEARIVLVGRQDALEQAMGAIGNGFGERLSLRAASEVIAMDDPPAIAMRSKKDSSMRVAIDLVKSGEAQAAVSAGNTGALMAISRFVLKTLPGIDRPAIATILPTRKGQTYVLDLGANVDCLPEHLLQFGIMGAMLVSAVEHLDRPTVGLLNIGEEAIKGNEVVKRAAELLKTSGLNFYGNVEGDDIYKGTTDVVVCDGFVGNVALKTSEGLAQMLATFLREEFSRNLLSKAMALIAMPALKRFKHRVDHRRYNGAALLGLRGVVVKSHGSADAFAFEQAIHRAAEAASNRLIERITERMTAMGVAA.

It belongs to the PlsX family. In terms of assembly, homodimer. Probably interacts with PlsY.

It is found in the cytoplasm. It carries out the reaction a fatty acyl-[ACP] + phosphate = an acyl phosphate + holo-[ACP]. It functions in the pathway lipid metabolism; phospholipid metabolism. Catalyzes the reversible formation of acyl-phosphate (acyl-PO(4)) from acyl-[acyl-carrier-protein] (acyl-ACP). This enzyme utilizes acyl-ACP as fatty acyl donor, but not acyl-CoA. The chain is Phosphate acyltransferase from Aromatoleum aromaticum (strain DSM 19018 / LMG 30748 / EbN1) (Azoarcus sp. (strain EbN1)).